The chain runs to 319 residues: Vesicle-associated membrane protein-associated protein scs22 (319 aa).

One can recognise an MSP domain in the interval 1–121 (MALECDSTIV…SERKIRCVYS (121 aa)). Over 1–298 (MALECDSTIV…GAKVVPQIHN (298 aa)) the chain is Cytoplasmic. The span at 127–150 (ANAHANAHHQPAQTTTTSIPTSAT) shows a compositional bias: low complexity. Residues 127 to 244 (ANAHANAHHQ…TTSPNNENNA (118 aa)) form a disordered region. 3 stretches are compositionally biased toward polar residues: residues 151-165 (DNYTTVNGNVNQSYS), 185-201 (STATTQHTQLPKTSAVS), and 231-244 (SVPTTTSPNNENNA). Thr-236 carries the post-translational modification Phosphothreonine. Phosphoserine is present on residues Ser-237 and Ser-281. A helical; Anchor for type IV membrane protein membrane pass occupies residues 299–319 (TVTVQTAFLLAIICFLIGLLF).

This sequence belongs to the VAMP-associated protein (VAP) (TC 9.B.17) family. As to quaternary structure, interacts with epr1.

It localises to the endoplasmic reticulum membrane. Its function is as follows. Vesicle-associated membrane protein-associated protein (VAP) implicated in maintaining the cortical endoplasmic reticulum (ER)-plasma membrane (PM) attachment. ER-PM contacts function to modulate the distribution of contractile ring components to ensure robust ring assembly. ER-PM contacts function also in controlling exocytosis and maintenance of cell polarity regulating cell shape. VAPs play an important role in regulating eisosome assembly. VAPs also contribute to ER-phagy by tethering atg8 to the ER membrane, but also by maintaining the ER-plasma membrane contact. The protein is Vesicle-associated membrane protein-associated protein scs22 (scs22) of Schizosaccharomyces pombe (strain 972 / ATCC 24843) (Fission yeast).